Consider the following 284-residue polypeptide: MKNLENLEKDLKNDLKKDLKKEKPILVSFLVSGDPNIEATLKFMNALDEYCGVIELGIPFSDPIADGSTIQEANVRSLSNGYKIHQSFDVLREFRKFSDTPVVLMTYYNPIYKRGIENFVIQAKEAGANGLIIVDLPLDEAEQYRAICKKHDMGTVFLVAPNTPDERLMYSDEASTLFLYVISTFGITGARGSFEKMTFEFIARAKNLCDKNKLYVGFGISNGEHAEKIIENGADGVIVGSAFVDIIKEYGDSNETIYKLKELARELSEGIHKGYVKYNEKNKY.

Catalysis depends on proton acceptor residues glutamate 55 and aspartate 66.

It belongs to the TrpA family. Tetramer of two alpha and two beta chains.

The enzyme catalyses (1S,2R)-1-C-(indol-3-yl)glycerol 3-phosphate + L-serine = D-glyceraldehyde 3-phosphate + L-tryptophan + H2O. It participates in amino-acid biosynthesis; L-tryptophan biosynthesis; L-tryptophan from chorismate: step 5/5. The alpha subunit is responsible for the aldol cleavage of indoleglycerol phosphate to indole and glyceraldehyde 3-phosphate. This chain is Tryptophan synthase alpha chain, found in Methanococcus voltae.